Here is a 444-residue protein sequence, read N- to C-terminus: uncharacterized protein (444 aa).

An N6-(pyridoxal phosphate)lysine modification is found at K268.

This sequence belongs to the class-III pyridoxal-phosphate-dependent aminotransferase family. Pyridoxal 5'-phosphate is required as a cofactor.

This is an uncharacterized protein from Bacillus subtilis (strain 168).